The following is a 426-amino-acid chain: Serine--tRNA ligase (426 aa).

233–235 contributes to the L-serine binding site; sequence TAE. Residue 264–266 coordinates ATP; it reads RRE. Glutamate 287 is a binding site for L-serine. An ATP-binding site is contributed by 351–354; that stretch reads EISS. Serine 386 contacts L-serine.

Belongs to the class-II aminoacyl-tRNA synthetase family. Type-1 seryl-tRNA synthetase subfamily. As to quaternary structure, homodimer. The tRNA molecule binds across the dimer.

The protein resides in the cytoplasm. The enzyme catalyses tRNA(Ser) + L-serine + ATP = L-seryl-tRNA(Ser) + AMP + diphosphate + H(+). The catalysed reaction is tRNA(Sec) + L-serine + ATP = L-seryl-tRNA(Sec) + AMP + diphosphate + H(+). It participates in aminoacyl-tRNA biosynthesis; selenocysteinyl-tRNA(Sec) biosynthesis; L-seryl-tRNA(Sec) from L-serine and tRNA(Sec): step 1/1. Functionally, catalyzes the attachment of serine to tRNA(Ser). Is also able to aminoacylate tRNA(Sec) with serine, to form the misacylated tRNA L-seryl-tRNA(Sec), which will be further converted into selenocysteinyl-tRNA(Sec). This is Serine--tRNA ligase from Prochlorococcus marinus (strain NATL2A).